The chain runs to 279 residues: Thymidylate synthase 1 (279 aa).

Arginine 141 to arginine 142 is a dUMP binding site. Catalysis depends on cysteine 161, which acts as the Nucleophile. Residues arginine 181–aspartate 184, asparagine 192, and histidine 222–tyrosine 224 contribute to the dUMP site. Aspartate 184 is a (6R)-5,10-methylene-5,6,7,8-tetrahydrofolate binding site. Alanine 278 provides a ligand contact to (6R)-5,10-methylene-5,6,7,8-tetrahydrofolate.

The protein belongs to the thymidylate synthase family. Bacterial-type ThyA subfamily. In terms of assembly, homodimer.

The protein localises to the cytoplasm. It carries out the reaction dUMP + (6R)-5,10-methylene-5,6,7,8-tetrahydrofolate = 7,8-dihydrofolate + dTMP. Its pathway is pyrimidine metabolism; dTTP biosynthesis. Catalyzes the reductive methylation of 2'-deoxyuridine-5'-monophosphate (dUMP) to 2'-deoxythymidine-5'-monophosphate (dTMP) while utilizing 5,10-methylenetetrahydrofolate (mTHF) as the methyl donor and reductant in the reaction, yielding dihydrofolate (DHF) as a by-product. This enzymatic reaction provides an intracellular de novo source of dTMP, an essential precursor for DNA biosynthesis. The chain is Thymidylate synthase 1 from Bacillus subtilis (strain 168).